A 315-amino-acid polypeptide reads, in one-letter code: Diacylglycerol kinase (315 aa).

The 132-residue stretch at 1-132 (MRKRARIIYN…VDIGKMNNRY (132 aa)) folds into the DAGKc domain. ATP is bound by residues 10–14 (NPTSG), T41, 67–73 (GDGTLNE), and T94. The Mg(2+) site is built by K213, D216, and Y218. E273 functions as the Proton acceptor in the catalytic mechanism.

The protein belongs to the diacylglycerol/lipid kinase family. As to quaternary structure, homodimer. It depends on Mg(2+) as a cofactor.

The catalysed reaction is a 1,2-diacyl-sn-glycerol + ATP = a 1,2-diacyl-sn-glycero-3-phosphate + ADP + H(+). In terms of biological role, catalyzes the phosphorylation of diacylglycerol (DAG) into phosphatidic acid. Is a key enzyme involved in the production of lipoteichoic acid by reintroducing DAG formed from the breakdown of membrane phospholipids into the phosphatidylglycerol biosynthetic pathway. This Staphylococcus aureus (strain bovine RF122 / ET3-1) protein is Diacylglycerol kinase (dagK).